Here is a 410-residue protein sequence, read N- to C-terminus: Porin-like protein GalP (410 aa).

An N-terminal signal peptide occupies residues 1-25 (MKCRTLYPLVPTFALAASLPLQALA).

It belongs to the outer membrane porin (Opr) (TC 1.B.25) family.

Its function is as follows. Probable transporter, possibly involved in the gallate degradation pathway. May play a role in the uptake of low gallate concentrations that may exist in the natural habitats of P.putida. The polypeptide is Porin-like protein GalP (galP) (Pseudomonas putida (strain ATCC 47054 / DSM 6125 / CFBP 8728 / NCIMB 11950 / KT2440)).